The sequence spans 102 residues: Small ribosomal subunit protein uS10 (102 aa).

It belongs to the universal ribosomal protein uS10 family. In terms of assembly, part of the 30S ribosomal subunit.

Its function is as follows. Involved in the binding of tRNA to the ribosomes. The polypeptide is Small ribosomal subunit protein uS10 (Leuconostoc citreum (strain KM20)).